The primary structure comprises 255 residues: Octanoyltransferase (255 aa).

Residues 54-238 (GDAAELVWLL…AFTEIFGATV (185 aa)) form the BPL/LPL catalytic domain. Residues 92–99 (RGGQLTYH), 167–169 (AIG), and 180–182 (GIA) contribute to the substrate site. Cys-198 (acyl-thioester intermediate) is an active-site residue.

This sequence belongs to the LipB family.

Its subcellular location is the cytoplasm. It catalyses the reaction octanoyl-[ACP] + L-lysyl-[protein] = N(6)-octanoyl-L-lysyl-[protein] + holo-[ACP] + H(+). It functions in the pathway protein modification; protein lipoylation via endogenous pathway; protein N(6)-(lipoyl)lysine from octanoyl-[acyl-carrier-protein]: step 1/2. Its function is as follows. Catalyzes the transfer of endogenously produced octanoic acid from octanoyl-acyl-carrier-protein onto the lipoyl domains of lipoate-dependent enzymes. Lipoyl-ACP can also act as a substrate although octanoyl-ACP is likely to be the physiological substrate. The protein is Octanoyltransferase of Rhodopseudomonas palustris (strain HaA2).